The sequence spans 250 residues: tRNA (guanine-N(1)-)-methyltransferase (250 aa).

Residues Gly-114 and 134–139 (IGDYVL) each bind S-adenosyl-L-methionine.

It belongs to the RNA methyltransferase TrmD family. Homodimer.

It localises to the cytoplasm. It carries out the reaction guanosine(37) in tRNA + S-adenosyl-L-methionine = N(1)-methylguanosine(37) in tRNA + S-adenosyl-L-homocysteine + H(+). Its function is as follows. Specifically methylates guanosine-37 in various tRNAs. This chain is tRNA (guanine-N(1)-)-methyltransferase, found in Moorella thermoacetica (strain ATCC 39073 / JCM 9320).